The primary structure comprises 454 residues: Ribosomal protein uS12 methylthiotransferase RimO (454 aa).

The MTTase N-terminal domain maps to 14–125; sequence SKVAFSHVGC…IAKVLDRVEQ (112 aa). [4Fe-4S] cluster is bound by residues Cys23, Cys59, Cys88, Cys163, Cys167, and Cys170. The 230-residue stretch at 149–378 folds into the Radical SAM core domain; that stretch reads DKNKFVAYLR…ISVQQNISKD (230 aa). Residues 381–452 enclose the TRAM domain; that stretch reads QTYVGSKMKI…EYDLYGEIIK (72 aa).

It belongs to the methylthiotransferase family. RimO subfamily. The cofactor is [4Fe-4S] cluster.

The protein localises to the cytoplasm. The enzyme catalyses L-aspartate(89)-[ribosomal protein uS12]-hydrogen + (sulfur carrier)-SH + AH2 + 2 S-adenosyl-L-methionine = 3-methylsulfanyl-L-aspartate(89)-[ribosomal protein uS12]-hydrogen + (sulfur carrier)-H + 5'-deoxyadenosine + L-methionine + A + S-adenosyl-L-homocysteine + 2 H(+). In terms of biological role, catalyzes the methylthiolation of an aspartic acid residue of ribosomal protein uS12. The chain is Ribosomal protein uS12 methylthiotransferase RimO from Prochlorococcus marinus (strain AS9601).